A 905-amino-acid chain; its full sequence is Transcription termination factor 1 (905 aa).

2 stretches are compositionally biased toward basic and acidic residues: residues 1–16 and 24–33; these read MEGE…PVSD and IHKERPQKHS. The disordered stretch occupies residues 1–33; it reads MEGESSRFEIHTPVSDKKKKKCSIHKERPQKHS. An N-terminal region (NRD) region spans residues 1-223; it reads MEGESSRFEI…AHKNKSKKKK (223 aa). S65 is subject to Phosphoserine. Residues 151–443 form a disordered region; sequence SHAHKSEALH…KSRPRQKKTQ (293 aa). Basic residues-rich tracts occupy residues 163-174 and 215-226; these read VREKKNKKHQRK and HKNKSKKKKKKS. S240 is subject to Phosphoserine. T248 is subject to Phosphothreonine. Basic residues-rich tracts occupy residues 270–283, 330–339, and 385–401; these read THKK…KKKS, NKSKKKKKKS, and TKKK…KRAR. S403 is modified (phosphoserine). Residues 410-419 are compositionally biased toward polar residues; it reads PSKNSESTLF. At Y476 the chain carries Phosphotyrosine. Residues S478, S481, and S487 each carry the phosphoserine modification. The may be involved in interaction with ARF stretch occupies residues 498–886; the sequence is LQEFIPNIKD…IEKESEGQAP (389 aa). Myb-like domains lie at 612-661 and 661-745; these read DVNN…SQIS and SSQR…TEIL. K700 participates in a covalent cross-link: Glycyl lysine isopeptide (Lys-Gly) (interchain with G-Cter in SUMO2). S872 carries the post-translational modification Phosphoserine.

Oligomer. The oligomeric structure enables to interact simultaneously with two separate DNA fragments. Interacts with BAZ2A/TIP5. Interacts with CAVIN1. Interacts (via the N-terminal region (NRD) and a C-terminal region) with CDKN2A/ARF; the interaction is direct. Interacts (via C-terminal region) with NPM1/B23.

The protein resides in the nucleus. It is found in the nucleolus. Its subcellular location is the nucleoplasm. Its function is as follows. Multifunctional nucleolar protein that terminates ribosomal gene transcription, mediates replication fork arrest and regulates RNA polymerase I transcription on chromatin. Plays a dual role in rDNA regulation, being involved in both activation and silencing of rDNA transcription. Interaction with BAZ2A/TIP5 recovers DNA-binding activity. This chain is Transcription termination factor 1 (TTF1), found in Homo sapiens (Human).